Consider the following 476-residue polypeptide: Inactive glucose-1-phosphate adenylyltransferase small subunit 2, chloroplastic (476 aa).

The transit peptide at 1-55 (MQISSSSFITKFTNLHMVRSTSDHHQWRHNYNLKQLFIPNLSVSNSQHLPLNQSV) directs the protein to the chloroplast.

This sequence belongs to the bacterial/plant glucose-1-phosphate adenylyltransferase family. In terms of assembly, heterotetramer. Expressed at very low levels in leaves, inflorescences, fruits, and roots.

The protein resides in the plastid. Its subcellular location is the chloroplast. The chain is Inactive glucose-1-phosphate adenylyltransferase small subunit 2, chloroplastic from Arabidopsis thaliana (Mouse-ear cress).